The following is a 357-amino-acid chain: Alanine racemase (357 aa).

Lys35 serves as the catalytic Proton acceptor; specific for D-alanine. N6-(pyridoxal phosphate)lysine is present on Lys35. Arg131 contributes to the substrate binding site. Tyr256 (proton acceptor; specific for L-alanine) is an active-site residue. Met304 lines the substrate pocket.

Belongs to the alanine racemase family. Pyridoxal 5'-phosphate serves as cofactor.

It carries out the reaction L-alanine = D-alanine. It functions in the pathway amino-acid biosynthesis; D-alanine biosynthesis; D-alanine from L-alanine: step 1/1. In terms of biological role, catalyzes the interconversion of L-alanine and D-alanine. May also act on other amino acids. The sequence is that of Alanine racemase (alr) from Legionella pneumophila (strain Lens).